A 372-amino-acid polypeptide reads, in one-letter code: Glutamate 5-kinase (372 aa).

K14 provides a ligand contact to ATP. Substrate contacts are provided by S54, D141, and N153. 173–174 (TD) contacts ATP. Residues 280 to 358 (AGRIVLDQGA…TDILSILGFV (79 aa)) enclose the PUA domain.

This sequence belongs to the glutamate 5-kinase family.

The protein localises to the cytoplasm. It carries out the reaction L-glutamate + ATP = L-glutamyl 5-phosphate + ADP. It functions in the pathway amino-acid biosynthesis; L-proline biosynthesis; L-glutamate 5-semialdehyde from L-glutamate: step 1/2. Its function is as follows. Catalyzes the transfer of a phosphate group to glutamate to form L-glutamate 5-phosphate. The sequence is that of Glutamate 5-kinase from Herminiimonas arsenicoxydans.